The sequence spans 251 residues: Triosephosphate isomerase 1 (251 aa).

9 to 11 (NWK) lines the substrate pocket. His95 functions as the Electrophile in the catalytic mechanism. The active-site Proton acceptor is Glu167. Substrate-binding positions include Gly173, Ser213, and 234–235 (GG).

It belongs to the triosephosphate isomerase family. Homodimer.

It is found in the cytoplasm. It catalyses the reaction D-glyceraldehyde 3-phosphate = dihydroxyacetone phosphate. It participates in carbohydrate biosynthesis; gluconeogenesis. The protein operates within carbohydrate degradation; glycolysis; D-glyceraldehyde 3-phosphate from glycerone phosphate: step 1/1. Functionally, involved in the gluconeogenesis. Catalyzes stereospecifically the conversion of dihydroxyacetone phosphate (DHAP) to D-glyceraldehyde-3-phosphate (G3P). The protein is Triosephosphate isomerase 1 of Listeria innocua serovar 6a (strain ATCC BAA-680 / CLIP 11262).